Consider the following 72-residue polypeptide: uncharacterized protein (72 aa).

The signal sequence occupies residues M1 to G19. A lipid anchor (N-palmitoyl cysteine) is attached at C20. The S-diacylglycerol cysteine moiety is linked to residue C20.

This sequence to E.coli YgdI.

The protein resides in the cell membrane. This is an uncharacterized protein from Escherichia coli O6:H1 (strain CFT073 / ATCC 700928 / UPEC).